Reading from the N-terminus, the 1392-residue chain is MNYSFTEKKRIRKSFAKRENVLEVPFLLATQIDSYAKFLQLENAFDKRTDDGLQAAFNSIFPIVSHNGYARLEFVYYTLGEPLFDIPECQLRGITYAAPLRARIRLVILDKEASKPTVKEVRENEVYMGEIPLMTPSGSFVINGTERVIVSQLHRSPGVFFEHDKGKTHSSGKLLFSARIIPYRGSWLDFEFDPKDLLYFRIDRRRKMPVTILLKALGYNNEQILDIFYDKETFYLSSNGVQTDLVAGRLKGETAKVDILDKEGNVLVAKGKRITAKNIRDITNAGLTRLDVEQESLLGKALAADLIDSETGEVLASANDEITEELLAKFDINGVKEITTLYINELDQGAYISNTLRTDETAGRQAARVAIYRMMRPGEPPTEEAVEQLFNRLFFSEDSYDLSRVGRMKFNTRTYEQKLSEAQQNSWYGRLLNETFAGAADKGGYVLSVEDIVASIATLVELRNGHGEVDDIDHLGNRRVRSVGELTENQFRSGLARVERAVKERLNQAESENLMPHDLINAKPVSAAIKEFFGSSQLSQFMDQTNPLSEVTHKRRVSALGPGGLTRERAGFEVRDVHPTHYGRVCPIETPEGPNIGLINSLSVYARTNDYGFLETPYRRVIDGKVTEEIDYLSAIEEGRYVIAQANADLDSDGNLIGDLVTCREKGETIMATPDRVQYMDVATGQVVSVAASLIPFLEHDDANRALMGANMQRQAVPCLRPEKPMVGTGIERSVAVDSATAIVARRGGVVEYVDANRVVIRVHDDEATAGEVGVDIYNLVKFTRSNQSTNINQRPAVKAGDVLQRGDLVADGASTDLGELALGQNMTIAFMPWNGYNYEDSILISEKVAADDRYTSIHIEELNVVARDTKLGAEDITRDIPNLSERMQNRLDESGIVYIGAEVEAGDVLVGKVTPKGETQLTPEEKLLRAIFGEKASDVKDTSLRMPTGMSGTVIDVQVFTREGIQRDKRAQSIIDSELKRYRLDLNDQLRIFDNDAFDRIERMIVGQKANGGPMKLAKGSEITTEYLAGLPSRHDWFDIRLTDEDLAKQLELIKLSLQQKREEADELYEIKKKKLTQGDELQPGVQKMVKVFIAIKRRLQAGDKMAGRHGNKGVVSRILPVEDMPYMADGRPVDIVLNPLGVPSRMNIGQILEVHLGWAAKGIGERIDRMLKERRKAGELREFLNKLYNGSGKKEDLDSLTDEEIIELASNLRKGASFASPVFDGAKESEIREMLNLAYPSEDPEVEKLGFNDSKTQITLYDGRSGEAFDRKVTVGVMHYLKLHHLVDEKMHARSTGPYSLVTQQPLGGKAQFGGQRFGEMEVWALEAYGAAYTLQEMLTVKSDDVNGRTKMYENIVKGEHKIDAGMPESFNVLVKEIRSLGLDIDLERY.

The protein belongs to the RNA polymerase beta chain family. In terms of assembly, the RNAP catalytic core consists of 2 alpha, 1 beta, 1 beta' and 1 omega subunit. When a sigma factor is associated with the core the holoenzyme is formed, which can initiate transcription.

The catalysed reaction is RNA(n) + a ribonucleoside 5'-triphosphate = RNA(n+1) + diphosphate. Its function is as follows. DNA-dependent RNA polymerase catalyzes the transcription of DNA into RNA using the four ribonucleoside triphosphates as substrates. This Neisseria gonorrhoeae (strain NCCP11945) protein is DNA-directed RNA polymerase subunit beta.